A 287-amino-acid chain; its full sequence is Maleylpyruvate hydrolase (287 aa).

3 residues coordinate a divalent metal cation: Glu-143, Glu-145, and Asp-174.

Belongs to the FAH family. In terms of assembly, homodimer.

It carries out the reaction 3-maleylpyruvate + H2O = maleate + pyruvate + H(+). Its activity is regulated as follows. Activated by Mn(2+). Inhibited by Ni(2+), Cd(2+), Co(2+) or Cu(2+). Functionally, involved in the degradation of gentisate. Catalyzes the hydrolysis of 3-maleylpyruvate, the ring-cleavage product of gentisate. This Aquipseudomonas alcaligenes (Pseudomonas alcaligenes) protein is Maleylpyruvate hydrolase.